The primary structure comprises 162 residues: Transcriptional repressor NrdR (162 aa).

Positions 1–21 are disordered; sequence MNCPDCGNGRTRVIDTGASSD. A zinc finger spans residues 3-34; that stretch reads CPDCGNGRTRVIDTGASSDGASVRRRRECQRC. The region spanning 49–139 is the ATP-cone domain; that stretch reads LQVKKRDGTI…VYKAFSEPQE (91 aa).

It belongs to the NrdR family. Zn(2+) serves as cofactor.

Its function is as follows. Negatively regulates transcription of bacterial ribonucleotide reductase nrd genes and operons by binding to NrdR-boxes. This is Transcriptional repressor NrdR from Natronomonas pharaonis (strain ATCC 35678 / DSM 2160 / CIP 103997 / JCM 8858 / NBRC 14720 / NCIMB 2260 / Gabara) (Halobacterium pharaonis).